Reading from the N-terminus, the 120-residue chain is MRVKGGSVTRQRRKRWLEKAEGSWGTRNTSYRIARQTVIRAAEYAYRDRRNKKRDFRKLWISRINAAVRELGYTYSQFMNALVKANVVTKDGQGLNRKMLSELAINNPEAFNQLVDKVMK.

Belongs to the bacterial ribosomal protein bL20 family.

Functionally, binds directly to 23S ribosomal RNA and is necessary for the in vitro assembly process of the 50S ribosomal subunit. It is not involved in the protein synthesizing functions of that subunit. This chain is Large ribosomal subunit protein bL20, found in Ureaplasma parvum serovar 3 (strain ATCC 27815 / 27 / NCTC 11736).